A 273-amino-acid polypeptide reads, in one-letter code: Imidazole glycerol phosphate synthase subunit HisF (273 aa).

Active-site residues include D11 and D134.

Belongs to the HisA/HisF family. Heterodimer of HisH and HisF.

Its subcellular location is the cytoplasm. The enzyme catalyses 5-[(5-phospho-1-deoxy-D-ribulos-1-ylimino)methylamino]-1-(5-phospho-beta-D-ribosyl)imidazole-4-carboxamide + L-glutamine = D-erythro-1-(imidazol-4-yl)glycerol 3-phosphate + 5-amino-1-(5-phospho-beta-D-ribosyl)imidazole-4-carboxamide + L-glutamate + H(+). It functions in the pathway amino-acid biosynthesis; L-histidine biosynthesis; L-histidine from 5-phospho-alpha-D-ribose 1-diphosphate: step 5/9. Its function is as follows. IGPS catalyzes the conversion of PRFAR and glutamine to IGP, AICAR and glutamate. The HisF subunit catalyzes the cyclization activity that produces IGP and AICAR from PRFAR using the ammonia provided by the HisH subunit. This is Imidazole glycerol phosphate synthase subunit HisF from Methanocella arvoryzae (strain DSM 22066 / NBRC 105507 / MRE50).